Reading from the N-terminus, the 469-residue chain is UDP-N-acetylmuramate--L-alanine ligase (469 aa).

120-126 (GTHGKTT) contributes to the ATP binding site.

It belongs to the MurCDEF family.

It is found in the cytoplasm. The enzyme catalyses UDP-N-acetyl-alpha-D-muramate + L-alanine + ATP = UDP-N-acetyl-alpha-D-muramoyl-L-alanine + ADP + phosphate + H(+). It participates in cell wall biogenesis; peptidoglycan biosynthesis. Cell wall formation. This is UDP-N-acetylmuramate--L-alanine ligase from Acetivibrio thermocellus (strain ATCC 27405 / DSM 1237 / JCM 9322 / NBRC 103400 / NCIMB 10682 / NRRL B-4536 / VPI 7372) (Clostridium thermocellum).